We begin with the raw amino-acid sequence, 247 residues long: GTP cyclohydrolase 1 type 2 homolog (247 aa).

5 residues coordinate a divalent metal cation: His63, His64, Asp101, His215, and Glu219.

Belongs to the GTP cyclohydrolase I type 2/NIF3 family. As to quaternary structure, homohexamer.

This chain is GTP cyclohydrolase 1 type 2 homolog, found in Buchnera aphidicola subsp. Schizaphis graminum (strain Sg).